Consider the following 313-residue polypeptide: tRNA uridine(34) hydroxylase (313 aa).

The Rhodanese domain maps to 124–218 (SDPEVLLIDT…YLEEVPQEET (95 aa)). Cys178 functions as the Cysteine persulfide intermediate in the catalytic mechanism.

It belongs to the TrhO family.

It catalyses the reaction uridine(34) in tRNA + AH2 + O2 = 5-hydroxyuridine(34) in tRNA + A + H2O. Its function is as follows. Catalyzes oxygen-dependent 5-hydroxyuridine (ho5U) modification at position 34 in tRNAs. The polypeptide is tRNA uridine(34) hydroxylase (Pseudomonas fluorescens (strain SBW25)).